Reading from the N-terminus, the 91-residue chain is Small ribosomal subunit protein bS18 (91 aa).

The segment at 1–27 is disordered; sequence MTQQSNTERKPRAKGPKRPRKPKVDPF. Basic residues predominate over residues 11–21; it reads PRAKGPKRPRK.

This sequence belongs to the bacterial ribosomal protein bS18 family. In terms of assembly, part of the 30S ribosomal subunit. Forms a tight heterodimer with protein bS6.

Binds as a heterodimer with protein bS6 to the central domain of the 16S rRNA, where it helps stabilize the platform of the 30S subunit. In Deinococcus geothermalis (strain DSM 11300 / CIP 105573 / AG-3a), this protein is Small ribosomal subunit protein bS18.